The primary structure comprises 227 residues: MKINFLTLFPRYFEPLINESIIKKAVDKKILEFNVVDFRDFTKSKHRKVDDEIYGGGHGLLLQVEPIDLALDSLENRGGYKILVTPQGKIFDQKMANKLAKYDQITLISGRYEGFDERVTYLVDEEISIGDYVLTGGELPAMVIADSICRLVPGVIKKESVENDSFQNEGLLDYPQYTRPREYKNMKVPEVLFNGNHKEISEWKLKAQLEKTKKNRPDILERIKNEK.

S-adenosyl-L-methionine contacts are provided by residues G110 and 129–134 (IGDYVL).

Belongs to the RNA methyltransferase TrmD family. Homodimer.

Its subcellular location is the cytoplasm. The enzyme catalyses guanosine(37) in tRNA + S-adenosyl-L-methionine = N(1)-methylguanosine(37) in tRNA + S-adenosyl-L-homocysteine + H(+). Specifically methylates guanosine-37 in various tRNAs. The sequence is that of tRNA (guanine-N(1)-)-methyltransferase from Mycoplasmopsis synoviae (strain 53) (Mycoplasma synoviae).